We begin with the raw amino-acid sequence, 366 residues long: Spermidine/putrescine import ATP-binding protein PotA (366 aa).

An ABC transporter domain is found at Ile14–Ile247. Gly49 to Thr56 is a binding site for ATP.

This sequence belongs to the ABC transporter superfamily. Spermidine/putrescine importer (TC 3.A.1.11.1) family. The complex is composed of two ATP-binding proteins (PotA), two transmembrane proteins (PotB and PotC) and a solute-binding protein (PotD).

The protein localises to the cell inner membrane. The catalysed reaction is ATP + H2O + polyamine-[polyamine-binding protein]Side 1 = ADP + phosphate + polyamineSide 2 + [polyamine-binding protein]Side 1.. Its function is as follows. Part of the ABC transporter complex PotABCD involved in spermidine/putrescine import. Responsible for energy coupling to the transport system. The polypeptide is Spermidine/putrescine import ATP-binding protein PotA (Ruegeria pomeroyi (strain ATCC 700808 / DSM 15171 / DSS-3) (Silicibacter pomeroyi)).